A 122-amino-acid chain; its full sequence is Serum amyloid A-2 protein (122 aa).

An N-terminal signal peptide occupies residues 1 to 19 (MKLLTSLVFCSLLLGVCHG). Positions 89 to 108 (RGHEDTMADQEANRHGRSGK) are enriched in basic and acidic residues. Positions 89–122 (RGHEDTMADQEANRHGRSGKDPNYYRPPGLPAKY) are disordered.

This sequence belongs to the SAA family. In terms of assembly, apolipoprotein of the HDL complex. Expressed by the liver; secreted in plasma.

The protein resides in the secreted. In terms of biological role, major acute phase reactant. This Mus musculus (Mouse) protein is Serum amyloid A-2 protein.